The chain runs to 132 residues: Small ribosomal subunit protein uS8 (132 aa).

The protein belongs to the universal ribosomal protein uS8 family. In terms of assembly, part of the 30S ribosomal subunit. Contacts proteins S5 and S12.

One of the primary rRNA binding proteins, it binds directly to 16S rRNA central domain where it helps coordinate assembly of the platform of the 30S subunit. The protein is Small ribosomal subunit protein uS8 of Streptococcus agalactiae serotype V (strain ATCC BAA-611 / 2603 V/R).